A 70-amino-acid chain; its full sequence is Large ribosomal subunit protein eL38 (70 aa).

The protein belongs to the eukaryotic ribosomal protein eL38 family.

The polypeptide is Large ribosomal subunit protein eL38 (RpL38) (Bombyx mori (Silk moth)).